Here is a 424-residue protein sequence, read N- to C-terminus: Serine--tRNA ligase (424 aa).

231–233 (TAE) provides a ligand contact to L-serine. 262 to 264 (RSE) provides a ligand contact to ATP. Glu-285 is a binding site for L-serine. 349–352 (EISS) serves as a coordination point for ATP. An L-serine-binding site is contributed by Ser-385.

This sequence belongs to the class-II aminoacyl-tRNA synthetase family. Type-1 seryl-tRNA synthetase subfamily. As to quaternary structure, homodimer. The tRNA molecule binds across the dimer.

It is found in the cytoplasm. The enzyme catalyses tRNA(Ser) + L-serine + ATP = L-seryl-tRNA(Ser) + AMP + diphosphate + H(+). It carries out the reaction tRNA(Sec) + L-serine + ATP = L-seryl-tRNA(Sec) + AMP + diphosphate + H(+). It functions in the pathway aminoacyl-tRNA biosynthesis; selenocysteinyl-tRNA(Sec) biosynthesis; L-seryl-tRNA(Sec) from L-serine and tRNA(Sec): step 1/1. In terms of biological role, catalyzes the attachment of serine to tRNA(Ser). Is also able to aminoacylate tRNA(Sec) with serine, to form the misacylated tRNA L-seryl-tRNA(Sec), which will be further converted into selenocysteinyl-tRNA(Sec). In Bacillus cereus (strain G9842), this protein is Serine--tRNA ligase.